Consider the following 761-residue polypeptide: Protein transport protein SEC23 C (761 aa).

4 residues coordinate Zn(2+): Cys-60, Cys-63, Cys-82, and Cys-85. The tract at residues 60 to 85 (CRTCRSVLNPYSVVDFSACNWGCPFC) is zinc finger-like.

This sequence belongs to the SEC23/SEC24 family. SEC24 subfamily. As to quaternary structure, component of the coat protein complex II (COPII), composed of at least five proteins: the Sec23/24 complex, the Sec13/31 complex and Sar1.

The protein localises to the cytoplasmic vesicle. It is found in the COPII-coated vesicle membrane. Its subcellular location is the endoplasmic reticulum membrane. It localises to the membrane. In terms of biological role, component of the coat protein complex II (COPII) which promotes the formation of transport vesicles from the endoplasmic reticulum (ER). The coat has two main functions, the physical deformation of the endoplasmic reticulum membrane into vesicles and the selection of cargo molecules. The polypeptide is Protein transport protein SEC23 C (Arabidopsis thaliana (Mouse-ear cress)).